Consider the following 364-residue polypeptide: Aminomethyltransferase (364 aa).

It belongs to the GcvT family. As to quaternary structure, the glycine cleavage system is composed of four proteins: P, T, L and H.

It catalyses the reaction N(6)-[(R)-S(8)-aminomethyldihydrolipoyl]-L-lysyl-[protein] + (6S)-5,6,7,8-tetrahydrofolate = N(6)-[(R)-dihydrolipoyl]-L-lysyl-[protein] + (6R)-5,10-methylene-5,6,7,8-tetrahydrofolate + NH4(+). Functionally, the glycine cleavage system catalyzes the degradation of glycine. In Escherichia coli O17:K52:H18 (strain UMN026 / ExPEC), this protein is Aminomethyltransferase.